The sequence spans 624 residues: Alpha-galactosidase 3 (624 aa).

An N-terminal signal peptide occupies residues methionine 1–glycine 22. 5 N-linked (GlcNAc...) asparagine glycosylation sites follow: asparagine 37, asparagine 56, asparagine 197, asparagine 259, and asparagine 293. The active-site Nucleophile is aspartate 347. Asparagine 393 carries an N-linked (GlcNAc...) asparagine glycan. The Proton donor role is filled by aspartate 412. Asparagine 469 carries an N-linked (GlcNAc...) asparagine glycan.

This sequence belongs to the glycosyl hydrolase 27 family.

The protein resides in the secreted. It catalyses the reaction Hydrolysis of terminal, non-reducing alpha-D-galactose residues in alpha-D-galactosides, including galactose oligosaccharides, galactomannans and galactolipids.. Its function is as follows. Alpha-galactosidase involved in the degradation of simple oligosaccharides like melibiose, raffinose and stachyose, and of polymeric galacto(gluco)mannans. The sequence is that of Alpha-galactosidase 3 (agl3) from Hypocrea jecorina (Trichoderma reesei).